The primary structure comprises 354 residues: Virulence plasmid protein pGP2-D (354 aa).

This Chlamydia trachomatis serovar L2 (strain ATCC VR-902B / DSM 19102 / 434/Bu) protein is Virulence plasmid protein pGP2-D.